Here is a 934-residue protein sequence, read N- to C-terminus: Isoleucine--tRNA ligase (934 aa).

Positions 58–68 (PYANGEIHIGH) match the 'HIGH' region motif. E559 contacts L-isoleucyl-5'-AMP. The short motif at 600–604 (KMSKS) is the 'KMSKS' region element. K603 contributes to the ATP binding site. Zn(2+) is bound by residues C897, C900, C917, and C920.

Belongs to the class-I aminoacyl-tRNA synthetase family. IleS type 1 subfamily. In terms of assembly, monomer. Zn(2+) serves as cofactor.

The protein resides in the cytoplasm. It carries out the reaction tRNA(Ile) + L-isoleucine + ATP = L-isoleucyl-tRNA(Ile) + AMP + diphosphate. Catalyzes the attachment of isoleucine to tRNA(Ile). As IleRS can inadvertently accommodate and process structurally similar amino acids such as valine, to avoid such errors it has two additional distinct tRNA(Ile)-dependent editing activities. One activity is designated as 'pretransfer' editing and involves the hydrolysis of activated Val-AMP. The other activity is designated 'posttransfer' editing and involves deacylation of mischarged Val-tRNA(Ile). This is Isoleucine--tRNA ligase from Teredinibacter turnerae (strain ATCC 39867 / T7901).